The chain runs to 193 residues: Corrinoid adenosyltransferase (193 aa).

ATP-binding positions include 5-13 (TKTGDKGQT), K22, 130-135 (RRAERR), and N154.

This sequence belongs to the Cob(I)alamin adenosyltransferase family. As to quaternary structure, homotrimer.

It localises to the cytoplasm. The catalysed reaction is 2 cob(II)yrinate a,c diamide + reduced [electron-transfer flavoprotein] + 2 ATP = 2 adenosylcob(III)yrinate a,c-diamide + 2 triphosphate + oxidized [electron-transfer flavoprotein] + 3 H(+). It catalyses the reaction 2 cob(II)alamin + reduced [electron-transfer flavoprotein] + 2 ATP = 2 adenosylcob(III)alamin + 2 triphosphate + oxidized [electron-transfer flavoprotein] + 3 H(+). It participates in cofactor biosynthesis; adenosylcobalamin biosynthesis; adenosylcobalamin from cob(II)yrinate a,c-diamide: step 2/7. The polypeptide is Corrinoid adenosyltransferase (yvqK) (Bacillus subtilis (strain 168)).